We begin with the raw amino-acid sequence, 317 residues long: 4-diphosphocytidyl-2-C-methyl-D-erythritol kinase (317 aa).

Lys-11 is an active-site residue. 99-109 (PVAAGLAGGST) is a binding site for ATP. The active site involves Asp-141.

The protein belongs to the GHMP kinase family. IspE subfamily.

It carries out the reaction 4-CDP-2-C-methyl-D-erythritol + ATP = 4-CDP-2-C-methyl-D-erythritol 2-phosphate + ADP + H(+). It participates in isoprenoid biosynthesis; isopentenyl diphosphate biosynthesis via DXP pathway; isopentenyl diphosphate from 1-deoxy-D-xylulose 5-phosphate: step 3/6. Catalyzes the phosphorylation of the position 2 hydroxy group of 4-diphosphocytidyl-2C-methyl-D-erythritol. The sequence is that of 4-diphosphocytidyl-2-C-methyl-D-erythritol kinase from Nostoc punctiforme (strain ATCC 29133 / PCC 73102).